A 507-amino-acid polypeptide reads, in one-letter code: MAAMMASITSELLFFLPYILLALLTFYTTTVAKCHRWRRTEEKRRCPNLPPGAIGWPFIGETFGYLRAHPATSVGRFMEEHIARYGKIYRSSLFGDRTVVSADAGLNRYILQNEGKLFECSYPRSIGGILGKWSMLVLVGDPHREMRAISLNFLSSLRLRAVLLPEVERHTLLVLRHWPSASPAVFSAQHEAKKFTFNLMAKNIMSMDPGEEETERLRLEYITFMKGVVSAPLNFPGTAYWKALKSRATILGVIERKMEDRLQKMNKEDSSIEEDDLLGWAMKQSNLSKEQILDLLLSLLFAGHETSSMALALAIFFLEGCPKAVQELREEHLEIARRQRLRGECKLSWEDYKDMVFTQCVINETLRLGNVVRFLHRKVIRDVHYKGYDIPSGWKILPVLAAVHLDSSLYEDPSRFNPWRWKGNASGVAQSGNFMPYGGGTRLCAGSELAKLEMAIFLHHLVLNFRWELAEPDQAFVYPFVDFPKGLPIRVHRIAQEEEKSVLTVDI.

Residues 12–32 traverse the membrane as a helical segment; the sequence is LLFFLPYILLALLTFYTTTVA. Cysteine 444 contacts heme.

This sequence belongs to the cytochrome P450 family. It depends on heme as a cofactor.

It is found in the membrane. The catalysed reaction is a C27-steroid + reduced [NADPH--hemoprotein reductase] + O2 = a (22S)-22-hydroxy C27-steroid + oxidized [NADPH--hemoprotein reductase] + H2O + H(+). The enzyme catalyses a C28-steroid + reduced [NADPH--hemoprotein reductase] + O2 = a (22S)-22-hydroxy C28-steroid + oxidized [NADPH--hemoprotein reductase] + H2O + H(+). It catalyses the reaction campesterol + reduced [NADPH--hemoprotein reductase] + O2 = (22S)-22-hydroxycampesterol + oxidized [NADPH--hemoprotein reductase] + H2O + H(+). It carries out the reaction campestanol + reduced [NADPH--hemoprotein reductase] + O2 = 6-deoxycathasterone + oxidized [NADPH--hemoprotein reductase] + H2O + H(+). It participates in plant hormone biosynthesis; brassinosteroid biosynthesis. Functionally, involved in reduction steps of the biosynthesis of plant campesterol-derivative steroids, ending to castasterone (CS) but missing brassinolide (BL). Catalyzes the conversion of campesterol (CR) to (22S)-22-hydroxycampesterol (22-OHCR, 22-hydroxyCR) and of campestanol (CN) to 6-deoxycathasterone (6-deoxoCT). The chain is Steroid (22S)-hydroxylase from Brachypodium distachyon (Purple false brome).